Here is a 140-residue protein sequence, read N- to C-terminus: Nucleoside diphosphate kinase (140 aa).

ATP contacts are provided by K11, F59, R87, T93, R104, and N114. H117 functions as the Pros-phosphohistidine intermediate in the catalytic mechanism.

It belongs to the NDK family. Homotetramer. Mg(2+) is required as a cofactor.

Its subcellular location is the cytoplasm. The enzyme catalyses a 2'-deoxyribonucleoside 5'-diphosphate + ATP = a 2'-deoxyribonucleoside 5'-triphosphate + ADP. The catalysed reaction is a ribonucleoside 5'-diphosphate + ATP = a ribonucleoside 5'-triphosphate + ADP. Major role in the synthesis of nucleoside triphosphates other than ATP. The ATP gamma phosphate is transferred to the NDP beta phosphate via a ping-pong mechanism, using a phosphorylated active-site intermediate. This chain is Nucleoside diphosphate kinase, found in Sinorhizobium fredii (strain NBRC 101917 / NGR234).